Consider the following 357-residue polypeptide: Histidinol-phosphate aminotransferase (357 aa).

Lys-212 carries the N6-(pyridoxal phosphate)lysine modification.

The protein belongs to the class-II pyridoxal-phosphate-dependent aminotransferase family. Histidinol-phosphate aminotransferase subfamily. As to quaternary structure, homodimer. Requires pyridoxal 5'-phosphate as cofactor.

The enzyme catalyses L-histidinol phosphate + 2-oxoglutarate = 3-(imidazol-4-yl)-2-oxopropyl phosphate + L-glutamate. It participates in amino-acid biosynthesis; L-histidine biosynthesis; L-histidine from 5-phospho-alpha-D-ribose 1-diphosphate: step 7/9. The sequence is that of Histidinol-phosphate aminotransferase from Pectobacterium carotovorum subsp. carotovorum (strain PC1).